A 337-amino-acid chain; its full sequence is Glyceraldehyde-3-phosphate dehydrogenase 1, cytosolic (337 aa).

The interval 1 to 151 (MGKIKIGING…YTSDVNIVSN (151 aa)) is binding to NAD. Residues 13–14 (RI), D35, and R82 contribute to the NAD(+) site. Residues 152–337 (ASCTTNCLAP…DLIRHMFKTQ (186 aa)) are catalytic. D-glyceraldehyde 3-phosphate-binding positions include 153-155 (SCT), T184, 213-214 (TG), and R236. Catalysis depends on C154, which acts as the Nucleophile. Residue N318 coordinates NAD(+).

The protein belongs to the glyceraldehyde-3-phosphate dehydrogenase family. In terms of assembly, homotetramer.

The protein localises to the cytoplasm. The enzyme catalyses D-glyceraldehyde 3-phosphate + phosphate + NAD(+) = (2R)-3-phospho-glyceroyl phosphate + NADH + H(+). Its pathway is carbohydrate degradation; glycolysis; pyruvate from D-glyceraldehyde 3-phosphate: step 1/5. In terms of biological role, key enzyme in glycolysis that catalyzes the first step of the pathway by converting D-glyceraldehyde 3-phosphate (G3P) into 3-phospho-D-glyceroyl phosphate. Essential for the maintenance of cellular ATP levels and carbohydrate metabolism. The sequence is that of Glyceraldehyde-3-phosphate dehydrogenase 1, cytosolic (GAPC1) from Zea mays (Maize).